We begin with the raw amino-acid sequence, 251 residues long: Triosephosphate isomerase (251 aa).

Residue 8–10 participates in substrate binding; that stretch reads NWK. Histidine 97 acts as the Electrophile in catalysis. Glutamate 170 acts as the Proton acceptor in catalysis. Residues glycine 176, serine 215, and 236–237 contribute to the substrate site; that span reads GG.

The protein belongs to the triosephosphate isomerase family. In terms of assembly, homodimer.

The protein resides in the cytoplasm. It catalyses the reaction D-glyceraldehyde 3-phosphate = dihydroxyacetone phosphate. It functions in the pathway carbohydrate biosynthesis; gluconeogenesis. Its pathway is carbohydrate degradation; glycolysis; D-glyceraldehyde 3-phosphate from glycerone phosphate: step 1/1. In terms of biological role, involved in the gluconeogenesis. Catalyzes stereospecifically the conversion of dihydroxyacetone phosphate (DHAP) to D-glyceraldehyde-3-phosphate (G3P). This is Triosephosphate isomerase from Nitratidesulfovibrio vulgaris (strain DSM 19637 / Miyazaki F) (Desulfovibrio vulgaris).